The sequence spans 607 residues: Glutamine--fructose-6-phosphate aminotransferase [isomerizing] (607 aa).

Cysteine 2 functions as the Nucleophile; for GATase activity in the catalytic mechanism. The Glutamine amidotransferase type-2 domain maps to 2-217 (CGIIGIIGRE…EGDWVVLTRE (216 aa)). SIS domains lie at 283 to 422 (PDFD…VKGQ) and 455 to 597 (VATA…VDQP). Catalysis depends on lysine 602, which acts as the For Fru-6P isomerization activity.

Homodimer.

It localises to the cytoplasm. It catalyses the reaction D-fructose 6-phosphate + L-glutamine = D-glucosamine 6-phosphate + L-glutamate. In terms of biological role, catalyzes the first step in hexosamine metabolism, converting fructose-6P into glucosamine-6P using glutamine as a nitrogen source. The protein is Glutamine--fructose-6-phosphate aminotransferase [isomerizing] of Zymomonas mobilis subsp. mobilis (strain ATCC 31821 / ZM4 / CP4).